A 193-amino-acid chain; its full sequence is Acyl carrier protein phosphodiesterase (193 aa).

The protein belongs to the AcpH family.

The catalysed reaction is holo-[ACP] + H2O = apo-[ACP] + (R)-4'-phosphopantetheine + H(+). Functionally, converts holo-ACP to apo-ACP by hydrolytic cleavage of the phosphopantetheine prosthetic group from ACP. The polypeptide is Acyl carrier protein phosphodiesterase (Escherichia coli O127:H6 (strain E2348/69 / EPEC)).